The following is a 102-amino-acid chain: NADH-quinone oxidoreductase subunit K (102 aa).

Transmembrane regions (helical) follow at residues 5-25, 31-51, and 62-82; these read LGHY…GIFL, IVLL…FVAF, and VFVF…LAIL.

This sequence belongs to the complex I subunit 4L family. NDH-1 is composed of 14 different subunits. Subunits NuoA, H, J, K, L, M, N constitute the membrane sector of the complex.

Its subcellular location is the cell inner membrane. The catalysed reaction is a quinone + NADH + 5 H(+)(in) = a quinol + NAD(+) + 4 H(+)(out). In terms of biological role, NDH-1 shuttles electrons from NADH, via FMN and iron-sulfur (Fe-S) centers, to quinones in the respiratory chain. The immediate electron acceptor for the enzyme in this species is believed to be ubiquinone. Couples the redox reaction to proton translocation (for every two electrons transferred, four hydrogen ions are translocated across the cytoplasmic membrane), and thus conserves the redox energy in a proton gradient. The chain is NADH-quinone oxidoreductase subunit K from Methylibium petroleiphilum (strain ATCC BAA-1232 / LMG 22953 / PM1).